The chain runs to 459 residues: Ribulose bisphosphate carboxylase large chain (459 aa).

Lysine 4 is modified (N6,N6,N6-trimethyllysine). Substrate is bound by residues asparagine 113 and threonine 163. The active-site Proton acceptor is the lysine 165. Residue lysine 167 participates in substrate binding. Mg(2+)-binding residues include lysine 191, aspartate 193, and glutamate 194. Lysine 191 is subject to N6-carboxylysine. Residue histidine 284 is the Proton acceptor of the active site. Positions 285, 317, and 369 each coordinate substrate.

The protein belongs to the RuBisCO large chain family. Type I subfamily. Heterohexadecamer of 8 large chains and 8 small chains; disulfide-linked. The disulfide link is formed within the large subunit homodimers. It depends on Mg(2+) as a cofactor. Post-translationally, the disulfide bond which can form in the large chain dimeric partners within the hexadecamer appears to be associated with oxidative stress and protein turnover.

It localises to the plastid. The protein localises to the chloroplast. It carries out the reaction 2 (2R)-3-phosphoglycerate + 2 H(+) = D-ribulose 1,5-bisphosphate + CO2 + H2O. The catalysed reaction is D-ribulose 1,5-bisphosphate + O2 = 2-phosphoglycolate + (2R)-3-phosphoglycerate + 2 H(+). RuBisCO catalyzes two reactions: the carboxylation of D-ribulose 1,5-bisphosphate, the primary event in carbon dioxide fixation, as well as the oxidative fragmentation of the pentose substrate in the photorespiration process. Both reactions occur simultaneously and in competition at the same active site. The protein is Ribulose bisphosphate carboxylase large chain of Heuchera micrantha (Alum root).